Consider the following 354-residue polypeptide: Uroporphyrinogen decarboxylase (354 aa).

Substrate-binding positions include 27–31 (RQAGR), Asp77, Tyr154, Thr209, and His327.

Belongs to the uroporphyrinogen decarboxylase family. As to quaternary structure, homodimer.

The protein resides in the cytoplasm. It carries out the reaction uroporphyrinogen III + 4 H(+) = coproporphyrinogen III + 4 CO2. It participates in porphyrin-containing compound metabolism; protoporphyrin-IX biosynthesis; coproporphyrinogen-III from 5-aminolevulinate: step 4/4. Catalyzes the decarboxylation of four acetate groups of uroporphyrinogen-III to yield coproporphyrinogen-III. In Salmonella paratyphi B (strain ATCC BAA-1250 / SPB7), this protein is Uroporphyrinogen decarboxylase.